Here is a 75-residue protein sequence, read N- to C-terminus: UPF0352 protein YejL (75 aa).

The protein belongs to the UPF0352 family.

The chain is UPF0352 protein YejL from Shigella sonnei (strain Ss046).